Reading from the N-terminus, the 453-residue chain is Plasmepsin II (453 aa).

The Cytoplasmic segment spans residues Met-1 to Lys-37. The propeptide occupies Met-1 to Gly-124. Residues Gly-38–Val-58 form a helical; Signal-anchor for type II membrane protein membrane-spanning segment. Over Tyr-59 to Leu-453 the chain is Lumenal. Residues Phe-140–Ala-447 enclose the Peptidase A1 domain. Asp-158 is an active-site residue. Cys-171 and Cys-176 are disulfide-bonded. The active site involves Asp-338. Cys-373 and Cys-409 form a disulfide bridge.

This sequence belongs to the peptidase A1 family. Component of the hemozoin formation complex (HFC) composed of falcipains FP2A and/or FP2B, plasmepsins PMII, PMIII/HAP and PMIV, heme detoxifying protein HDP and falcilysin FLN. The HFC complex is involved in hemoglobin degradation and detoxification of heme in the food vacuole during the asexual blood stage. Post-translationally, not N-glycosylated. Proteolytically cleaved into the soluble active mature form in the digestive vacuole by cysteine protease falcipains; the process begins at the early ring stage. Proteolysis requires an acidic environment. In absence of falcipains, autoprocessing may serve as an alternate activation system.

It is found in the membrane. Its subcellular location is the vacuole lumen. The protein localises to the vacuole membrane. It carries out the reaction Hydrolysis of the bonds linking certain hydrophobic residues in hemoglobin or globin. Also cleaves small molecules substrates such as Ala-Leu-Glu-Arg-Thr-Phe-|-Phe(NO2)-Ser-Phe-Pro-Thr.. Inhibited by pepstatin A. Functionally, during the asexual blood stage, participates in initial cleavage of native host hemoglobin (Hb) resulting in Hb denaturation. May cleave preferentially denatured hemoglobin that has been cleaved by PMI. Digestion of host Hb is an essential step which provides the parasite with amino acids for protein synthesis, and regulates osmolarity. The protein is Plasmepsin II of Plasmodium falciparum (isolate HB3).